A 242-amino-acid polypeptide reads, in one-letter code: EF-hand domain-containing protein D2 (242 aa).

The segment at Met-1–Ala-53 is disordered. At Ala-2 the chain carries N-acetylalanine. Ser-11 carries the post-translational modification Phosphoserine. The span at Gly-32 to Ala-42 shows a compositional bias: low complexity. Phosphoserine occurs at positions 76 and 78. Position 85 is a phosphotyrosine (Tyr-85). EF-hand domains lie at Lys-94–Pro-129 and Gln-130–Gly-165. Ca(2+)-binding residues include Asp-107, Asp-111, Glu-118, Asp-143, Asp-145, Asp-147, Lys-149, and Glu-154. Lys-235 bears the N6-acetyllysine mark.

As to quaternary structure, interacts with CASP9; with inactive form.

The protein localises to the membrane raft. Its function is as follows. May regulate B-cell receptor (BCR)-induced immature and primary B-cell apoptosis. Plays a role as negative regulator of the canonical NF-kappa-B-activating branch. Controls spontaneous apoptosis through the regulation of BCL2L1 abundance. This is EF-hand domain-containing protein D2 (EFHD2) from Bos taurus (Bovine).